A 31-amino-acid polypeptide reads, in one-letter code: L-amino-acid oxidase (31 aa).

This sequence belongs to the flavin monoamine oxidase family. FIG1 subfamily. As to quaternary structure, homodimer; non-covalently linked. FAD serves as cofactor. Post-translationally, N-glycosylated. As to expression, expressed by the venom gland.

The protein localises to the secreted. It carries out the reaction an L-alpha-amino acid + O2 + H2O = a 2-oxocarboxylate + H2O2 + NH4(+). The catalysed reaction is L-leucine + O2 + H2O = 4-methyl-2-oxopentanoate + H2O2 + NH4(+). It catalyses the reaction L-phenylalanine + O2 + H2O = 3-phenylpyruvate + H2O2 + NH4(+). The enzyme catalyses L-histidine + O2 + H2O = 3-(imidazol-5-yl)pyruvate + H2O2 + NH4(+). In terms of biological role, catalyzes an oxidative deamination of predominantly hydrophobic and aromatic L-amino acids, thus producing hydrogen peroxide that may contribute to the diverse toxic effects of this enzyme. Is moderately active on L-Leu, L-His, and L-Phe, and very weakly active on L-Thr, and L-Cys. Exhibits diverse biological activities, such as hemorrhage, hemolysis, edema, antibacterial and antiparasitic activities, as well as regulation of platelet aggregation. Its effect on platelets is controversial, since it either induces aggregation or inhibits agonist-induced aggregation. These different effects are probably due to different experimental conditions. Inhibits growth of B.subtilis strain ATCC 6633 (MIC=32 uM), E.faecalis strain ATCC 12953 (MIC=32 uM), S.aureus strain ATCC 29213 (MIC=32 uM), S.pyogenes strain ATCC 19615 (MIC=8 uM), E.coli strain ATCC 8739 (MIC=4 uM), K.pneumoniae strain ATCC 13885 (MIC=2 uM), P.mirabilis strain ATCC 25933 (MIC=2 uM), P.aeruginosa strain ATCC 15442 (MIC=8 uM) and S.typhimurium strain ATCC 14028 (MIC=8 uM). The sequence is that of L-amino-acid oxidase from Bothrops mattogrossensis (Pitviper).